A 478-amino-acid polypeptide reads, in one-letter code: BTB/POZ domain-containing protein 17 (478 aa).

The N-terminal stretch at 1–28 (MPRRGYSKPGSWGSFWAMLTLVGLVTHA) is a signal peptide. Asn-61, Asn-100, and Asn-195 each carry an N-linked (GlcNAc...) asparagine glycan. Positions 63–132 (SDVVLRVQAA…LYCGELTVLL (70 aa)) constitute a BTB domain. A BACK domain is found at 169–269 (AVGWYHYAVG…IPPAQLFQLQ (101 aa)).

It is found in the secreted. The sequence is that of BTB/POZ domain-containing protein 17 (BTBD17) from Homo sapiens (Human).